The primary structure comprises 281 residues: Pantothenate synthetase (281 aa).

An ATP-binding site is contributed by 30–37; it reads MGNLHQGH. His37 acts as the Proton donor in catalysis. (R)-pantoate is bound at residue Gln61. Gln61 provides a ligand contact to beta-alanine. 149 to 152 serves as a coordination point for ATP; the sequence is GNKD. (R)-pantoate is bound at residue Gln155. Residues Ile178 and 186–189 contribute to the ATP site; that span reads MSSR.

This sequence belongs to the pantothenate synthetase family. Homodimer.

The protein localises to the cytoplasm. The enzyme catalyses (R)-pantoate + beta-alanine + ATP = (R)-pantothenate + AMP + diphosphate + H(+). It functions in the pathway cofactor biosynthesis; (R)-pantothenate biosynthesis; (R)-pantothenate from (R)-pantoate and beta-alanine: step 1/1. In terms of biological role, catalyzes the condensation of pantoate with beta-alanine in an ATP-dependent reaction via a pantoyl-adenylate intermediate. This Shewanella sp. (strain MR-7) protein is Pantothenate synthetase.